A 416-amino-acid polypeptide reads, in one-letter code: Neurotensin receptor type 2 (416 aa).

Residues 1–32 (METSSLWPPRPSPSAGLSLEARLGVDTRLWAK) lie on the Extracellular side of the membrane. The helical transmembrane segment at 33–55 (VLFTALYSLIFALGTAGNALSVH) threads the bilayer. The Cytoplasmic portion of the chain corresponds to 56-64 (VVLKARAGR). A helical membrane pass occupies residues 65–87 (PGRLRYHVLSLALSALLLLLISV). The Extracellular segment spans residues 88–109 (PMELYNFVWSHYPWVFGDLGCR). Cysteine 108 and cysteine 194 are disulfide-bonded. Residues 110-131 (GYYFVRELCAYATVLSVASLSA) traverse the membrane as a helical segment. Residues 132–154 (ERCLAVCQPLRARRLLTPRRTRR) are Cytoplasmic-facing. A helical transmembrane segment spans residues 155-176 (LLSLVWVASLGLALPMAVIMGQ). Residues 177–217 (KHEMERADGEPEPASRVCTVLVSRATLQVFIQVNVLVSFVL) lie on the Extracellular side of the membrane. Residues 218 to 237 (PLALTAFLNGITVNHLVALY) form a helical membrane-spanning segment. The Cytoplasmic portion of the chain corresponds to 238 to 297 (SQVPSASAQVNSIPSRLELLSEEGLLGFITWRKTLSLGVQASLVRHKDASQIRSLQHSAQ). A helical transmembrane segment spans residues 298–318 (VLRAIVAVYVICWLPYHARRL). Residues 319 to 337 (MYCYIPDDGWTDELYDFYH) lie on the Extracellular side of the membrane. The helical transmembrane segment at 338-358 (YFYMVTNTLFYVSSAVTPVLY) threads the bilayer. The Cytoplasmic portion of the chain corresponds to 359–416 (NAVSSSFRKLFLESLSSLCGEQRSVVPLPQEAPESTTSTYSFRLWGSPRNPSLGEIQV). Cysteine 377 is lipidated: S-palmitoyl cysteine. Position 410 is a phosphoserine (serine 410).

Belongs to the G-protein coupled receptor 1 family. Neurotensin receptor subfamily. NTSR2 sub-subfamily. In terms of tissue distribution, expressed maximally in the cerebellum, hippocampus, piriform cortex and neocortex of adult brain.

It is found in the cell membrane. Functionally, receptor for the tridecapeptide neurotensin. It is associated with G proteins that activate a phosphatidylinositol-calcium second messenger system. The chain is Neurotensin receptor type 2 (Ntsr2) from Mus musculus (Mouse).